Here is a 140-residue protein sequence, read N- to C-terminus: Putative pre-16S rRNA nuclease (140 aa).

Belongs to the YqgF nuclease family.

It is found in the cytoplasm. Functionally, could be a nuclease involved in processing of the 5'-end of pre-16S rRNA. This chain is Putative pre-16S rRNA nuclease, found in Yersinia pseudotuberculosis serotype IB (strain PB1/+).